Here is a 143-residue protein sequence, read N- to C-terminus: UPF0260 protein plu2141 (143 aa).

Belongs to the UPF0260 family.

The protein is UPF0260 protein plu2141 of Photorhabdus laumondii subsp. laumondii (strain DSM 15139 / CIP 105565 / TT01) (Photorhabdus luminescens subsp. laumondii).